The sequence spans 463 residues: Phosphomannomutase/phosphoglucomutase (463 aa).

Tyr-17 contributes to the alpha-D-glucose 1-phosphate binding site. Tyr-17 provides a ligand contact to alpha-D-mannose 1-phosphate. Residue Ser-108 is the Non-phosphorylated intermediate of the active site. The Mg(2+) site is built by Ser-108, Asp-242, Asp-244, and Asp-246. Ser-108 bears the Phosphoserine mark. Alpha-D-glucose 1-phosphate contacts are provided by residues Lys-285, His-308, Glu-325 to His-329, and Arg-421 to Thr-425. Alpha-D-mannose 1-phosphate-binding positions include His-308, Glu-325 to His-329, and Arg-421 to Thr-425.

Belongs to the phosphohexose mutase family. Monomer. The cofactor is Mg(2+).

It carries out the reaction alpha-D-mannose 1-phosphate = D-mannose 6-phosphate. The enzyme catalyses alpha-D-glucose 1-phosphate = alpha-D-glucose 6-phosphate. Its pathway is nucleotide-sugar biosynthesis; GDP-alpha-D-mannose biosynthesis; alpha-D-mannose 1-phosphate from D-fructose 6-phosphate: step 2/2. It functions in the pathway bacterial outer membrane biogenesis; lipopolysaccharide biosynthesis. In terms of biological role, highly reversible phosphoryltransferase. The phosphomannomutase activity produces a precursor for alginate polymerization, the alginate layer causes a mucoid phenotype and provides a protective barrier against host immune defenses and antibiotics. Also involved in core lipopolysaccaride (LPS) biosynthesis due to its phosphoglucomutase activity. Essential for rhamnolipid production, an exoproduct correlated with pathogenicity. Required for biofilm production. The reaction proceeds via 2 processive phosphoryl transferase reactions; first from enzyme-phospho-Ser-108 to the substrate (generating a bisphosphorylated substrate intermediate and a dephosphorylated enzyme), a 180 degree rotation of the intermediate (probably aided by movement of domain 4), and subsequent transfer of phosphate back to the enzyme. The chain is Phosphomannomutase/phosphoglucomutase (algC) from Pseudomonas aeruginosa (strain UCBPP-PA14).